The following is a 517-amino-acid chain: Maturase K (517 aa).

It belongs to the intron maturase 2 family. MatK subfamily.

It localises to the plastid. Its subcellular location is the chloroplast. Its function is as follows. Usually encoded in the trnK tRNA gene intron. Probably assists in splicing its own and other chloroplast group II introns. This chain is Maturase K, found in Paris tetraphylla.